An 81-amino-acid chain; its full sequence is WAP four-disulfide core domain protein 13 (81 aa).

The first 22 residues, 1–22 (MRPVSPLQLLLVLSLAPQPVLG), serve as a signal peptide directing secretion. One can recognise a WAP domain in the interval 31-74 (YILEPPPCRSEPGACNMFCTQQEECPEPLQCCSAYCGIVCTSNQ). 4 cysteine pairs are disulfide-bonded: Cys-38-Cys-62, Cys-45-Cys-66, Cys-49-Cys-61, and Cys-55-Cys-70.

Its subcellular location is the secreted. Putative acid-stable proteinase inhibitor. The polypeptide is WAP four-disulfide core domain protein 13 (Wfdc13) (Mus musculus (Mouse)).